The primary structure comprises 874 residues: Probable inorganic carbon transporter subunit DabA (874 aa).

Positions 398, 400, 580, and 595 each coordinate Zn(2+).

This sequence belongs to the inorganic carbon transporter (TC 9.A.2) DabA family. As to quaternary structure, forms a complex with DabB. Zn(2+) is required as a cofactor.

It is found in the cell membrane. Functionally, part of an energy-coupled inorganic carbon pump. The sequence is that of Probable inorganic carbon transporter subunit DabA from Bacillus thuringiensis subsp. konkukian (strain 97-27).